Here is an 882-residue protein sequence, read N- to C-terminus: Alanine--tRNA ligase (882 aa).

Residues histidine 570, histidine 574, cysteine 672, and histidine 676 each coordinate Zn(2+).

This sequence belongs to the class-II aminoacyl-tRNA synthetase family. Zn(2+) is required as a cofactor.

The protein resides in the cytoplasm. It carries out the reaction tRNA(Ala) + L-alanine + ATP = L-alanyl-tRNA(Ala) + AMP + diphosphate. In terms of biological role, catalyzes the attachment of alanine to tRNA(Ala) in a two-step reaction: alanine is first activated by ATP to form Ala-AMP and then transferred to the acceptor end of tRNA(Ala). Also edits incorrectly charged Ser-tRNA(Ala) and Gly-tRNA(Ala) via its editing domain. In Xanthomonas axonopodis pv. citri (strain 306), this protein is Alanine--tRNA ligase.